A 163-amino-acid chain; its full sequence is uncharacterized protein (163 aa).

Positions 136-161 form a coiled coil; the sequence is QKYIENHQKEINEHVEKLRTLHKELR.

This is an uncharacterized protein from Acanthamoeba polyphaga (Amoeba).